Consider the following 56-residue polypeptide: Ferredoxin (56 aa).

4Fe-4S ferredoxin-type domains are found at residues 2 to 28 (AYKI…SQGD) and 29 to 56 (TQFV…PVQE). Cys9, Cys12, Cys15, Cys19, Cys38, Cys41, Cys44, and Cys48 together coordinate [4Fe-4S] cluster.

[4Fe-4S] cluster is required as a cofactor.

Its function is as follows. Ferredoxins are iron-sulfur proteins that transfer electrons in a wide variety of metabolic reactions. This Clostridium perfringens (strain 13 / Type A) protein is Ferredoxin (fer).